The following is a 554-amino-acid chain: CTP synthase (554 aa).

An amidoligase domain region spans residues 1–279; the sequence is MSQPRAEHVT…DAFLIRRLDL (279 aa). Serine 21 lines the CTP pocket. Residue serine 21 coordinates UTP. Residues 22 to 27 and aspartate 79 contribute to the ATP site; that span reads SLGKGL. Aspartate 79 and glutamate 153 together coordinate Mg(2+). CTP contacts are provided by residues 160–162, 200–205, and lysine 236; these read DIE and KTKPTQ. Residues 200-205 and lysine 236 each bind UTP; that span reads KTKPTQ. The Glutamine amidotransferase type-1 domain maps to 304 to 551; it reads TVALVGKYID…VKAGLKHKND (248 aa). Residue glycine 367 coordinates L-glutamine. Cysteine 394 acts as the Nucleophile; for glutamine hydrolysis in catalysis. L-glutamine-binding positions include 395 to 398, glutamate 417, and arginine 478; that span reads LGLQ. Residues histidine 524 and glutamate 526 contribute to the active site.

This sequence belongs to the CTP synthase family. Homotetramer.

It catalyses the reaction UTP + L-glutamine + ATP + H2O = CTP + L-glutamate + ADP + phosphate + 2 H(+). The catalysed reaction is L-glutamine + H2O = L-glutamate + NH4(+). It carries out the reaction UTP + NH4(+) + ATP = CTP + ADP + phosphate + 2 H(+). It functions in the pathway pyrimidine metabolism; CTP biosynthesis via de novo pathway; CTP from UDP: step 2/2. Allosterically activated by GTP, when glutamine is the substrate; GTP has no effect on the reaction when ammonia is the substrate. The allosteric effector GTP functions by stabilizing the protein conformation that binds the tetrahedral intermediate(s) formed during glutamine hydrolysis. Inhibited by the product CTP, via allosteric rather than competitive inhibition. Its function is as follows. Catalyzes the ATP-dependent amination of UTP to CTP with either L-glutamine or ammonia as the source of nitrogen. Regulates intracellular CTP levels through interactions with the four ribonucleotide triphosphates. In Corynebacterium kroppenstedtii (strain DSM 44385 / JCM 11950 / CIP 105744 / CCUG 35717), this protein is CTP synthase.